A 124-amino-acid chain; its full sequence is Large ribosomal subunit protein bL12 (124 aa).

It belongs to the bacterial ribosomal protein bL12 family. As to quaternary structure, homodimer. Part of the ribosomal stalk of the 50S ribosomal subunit. Forms a multimeric L10(L12)X complex, where L10 forms an elongated spine to which 2 to 4 L12 dimers bind in a sequential fashion. Binds GTP-bound translation factors.

Functionally, forms part of the ribosomal stalk which helps the ribosome interact with GTP-bound translation factors. Is thus essential for accurate translation. The protein is Large ribosomal subunit protein bL12 of Cupriavidus necator (strain ATCC 17699 / DSM 428 / KCTC 22496 / NCIMB 10442 / H16 / Stanier 337) (Ralstonia eutropha).